Here is a 181-residue protein sequence, read N- to C-terminus: Large ribosomal subunit protein uL5 (181 aa).

This sequence belongs to the universal ribosomal protein uL5 family. Part of the 50S ribosomal subunit; part of the 5S rRNA/L5/L18/L25 subcomplex. Contacts the 5S rRNA and the P site tRNA. Forms a bridge to the 30S subunit in the 70S ribosome.

Its function is as follows. This is one of the proteins that bind and probably mediate the attachment of the 5S RNA into the large ribosomal subunit, where it forms part of the central protuberance. In the 70S ribosome it contacts protein S13 of the 30S subunit (bridge B1b), connecting the 2 subunits; this bridge is implicated in subunit movement. Contacts the P site tRNA; the 5S rRNA and some of its associated proteins might help stabilize positioning of ribosome-bound tRNAs. This chain is Large ribosomal subunit protein uL5, found in Helicobacter pylori (strain ATCC 700392 / 26695) (Campylobacter pylori).